We begin with the raw amino-acid sequence, 1009 residues long: MICAL-like protein 2 (1009 aa).

One can recognise a Calponin-homology (CH) domain in the interval 1–107 (MAAIKALQEW…YVSQYYNYFH (107 aa)). A forms an intramolecular interaction with the C-terminal coiled coil domain keeping the protein in a closed conformation region spans residues 1–260 (MAAIKALQEW…KSSNLASRKP (260 aa)). Phosphoserine is present on residues Ser-110, Ser-143, and Ser-153. Disordered regions lie at residues 114 to 180 (GMAG…PGTA), 247 to 268 (SVSP…ADTR), 348 to 447 (NSSP…TSKV), and 655 to 834 (SPSI…TSPV). Over residues 144 to 171 (PAQTQRSPLSPARTNPVVQRNEGGSQRP) the composition is skewed to polar residues. Residues 186–248 (SICGVCGKHV…THHSSEVTSV (63 aa)) enclose the LIM zinc-binding domain. Ser-249 carries the phosphoserine modification. A necessary and sufficient for interaction with actinins region spans residues 261-393 (GGVTADTRPF…QGQTASKGVK (133 aa)). Residues 261–805 (GGVTADTRPF…EDGTRSCKEE (545 aa)) form a mediates targeting to the cell plasma membrane region. Polar residues predominate over residues 348-419 (NSSPIGWSSP…AWTSSASKTQ (72 aa)). Residues 430 to 442 (PSAPAPASAPAPA) are compositionally biased toward pro residues. A compositionally biased stretch (basic and acidic residues) spans 694 to 730 (EGWRARLKPVDKKTPAGRSLEQKEPVLAEPRIGDTSR). Low complexity-rich tracts occupy residues 731 to 746 (KASS…TLTS) and 755 to 769 (PAGS…SPSP). 2 positions are modified to phosphoserine: Ser-766 and Ser-768. Over residues 791–817 (EPKKQEDGTRSCKEEKSPTRWSRERSA) the composition is skewed to basic and acidic residues. Positions 806–913 (KSPTRWSRER…LMYKSKDQRL (108 aa)) are forms an intramolecular interaction with the N-terminal Calponin-homology and LIM zinc-binding domains-containing region keeping the protein in a closed conformation. A Phosphoserine modification is found at Ser-832. The bMERB domain maps to 833–980 (PVRLHPDYIP…EQEEDQMLEN (148 aa)). Residues 841–880 (IPQEELQRQLQDIESQLDALELRGVELEKRLRAAEGDASE) are a coiled coil. Residues 913–1009 (LEEQQLDLQG…WSSKSKSGQA (97 aa)) are mediates interaction with RAB13 and is required for transition from the closed to the open conformation.

In terms of assembly, interacts with RAB13 (GTP-bound form); competes with RAB8A and is involved in tight junctions assembly. Interacts with RAB8A; competes with RAB13 and is involved in E-cadherin endocytic recycling. Interacts with RAB8B. Interacts (preferentially in opened conformation) with ACTN1 and ACTN4; stimulated by RAB13 activation. Interacts (via calponin-homology (CH) domain) with the filamins FLNA, FLNB and FLNC (via actin-binding domain). As to expression, detected in brain, lung, liver and kidney (at protein level).

It localises to the cell membrane. The protein resides in the cell junction. The protein localises to the tight junction. Its subcellular location is the recycling endosome. It is found in the cell projection. It localises to the neuron projection. The protein resides in the cytoplasm. The protein localises to the cytoskeleton. Its function is as follows. Effector of small Rab GTPases RAB8A and RAB13 which is involved in junctional complexes assembly through the regulation of cell adhesion molecules transport to the plasma membrane and actin cytoskeleton reorganization. Regulates the endocytic recycling of occludins, claudins and E-cadherin to the plasma membrane and may thereby regulate the establishment of tight junctions and adherens junctions. In parallel, may regulate actin cytoskeleton reorganization directly through interaction with F-actin or indirectly through actinins and filamins. Undergoes liquid-liquid phase separation to form tubular recycling endosomes. Plays 2 sequential roles in the biogenesis of tubular recycling endosomes: first organizes phase separation and then the closed form formed by interaction with RAB8A promotes endosomal tubulation. In Mus musculus (Mouse), this protein is MICAL-like protein 2 (Micall2).